The chain runs to 244 residues: Phosphoadenosine 5'-phosphosulfate reductase (244 aa).

The Nucleophile; cysteine thiosulfonate intermediate role is filled by Cys-239.

Belongs to the PAPS reductase family. CysH subfamily.

Its subcellular location is the cytoplasm. The enzyme catalyses [thioredoxin]-disulfide + sulfite + adenosine 3',5'-bisphosphate + 2 H(+) = [thioredoxin]-dithiol + 3'-phosphoadenylyl sulfate. The protein operates within sulfur metabolism; hydrogen sulfide biosynthesis; sulfite from sulfate: step 3/3. Functionally, catalyzes the formation of sulfite from phosphoadenosine 5'-phosphosulfate (PAPS) using thioredoxin as an electron donor. The sequence is that of Phosphoadenosine 5'-phosphosulfate reductase from Shigella dysenteriae serotype 1 (strain Sd197).